Reading from the N-terminus, the 287-residue chain is MYFTRDPVIETVITSREGYKLSIRNSKHLSQDPFVVEAVEVIRLGGTSFFRNCDHSKPFLVPAADYEVMEVRDAKINLKAVGLDRGVKIVSGREALLKMPRVAPVASVQEESSSSLEEGIIEDPVVATPSPASAAPMSKKEKRKEFKNEKWKEKKKQGRRRNSKEIADAVGSSQDMIDTITEECLQESSPEERDPCERRFALIPPPTRLISEGPEEPKESQPVTAVDLNESLNALVSESCDVIESILADEDTVIFTKESEKSSNETQELSSHSLEEASVHDRISSEE.

Disordered stretches follow at residues 109 to 175 (QEES…SSQD), 203 to 223 (IPPP…SQPV), and 257 to 287 (KESE…SSEE). The segment covering 110–136 (EESSSSLEEGIIEDPVVATPSPASAAP) has biased composition (low complexity). Positions 143–152 (RKEFKNEKWK) are enriched in basic and acidic residues. Residues 153-162 (EKKKQGRRRN) show a composition bias toward basic residues. The segment covering 273-287 (SLEEASVHDRISSEE) has biased composition (basic and acidic residues).

It belongs to the chlamydial CPn_0623/CT_504/TC_0791 family.

This is an uncharacterized protein from Chlamydia muridarum (strain MoPn / Nigg).